The chain runs to 131 residues: Acanthoscurrin-2 (131 aa).

Lysine amide is present on K130.

As to expression, expressed in hemocytes and secreted into the plasma following bacterial immune challenge.

The protein localises to the secreted. Antimicrobial protein. Strong activity against the Gram-negative bacterium E.coli SBS363 and yeast C.albicans. No detectable activity against the Gram-positive bacterium M.luteus. In Acanthoscurria gomesiana (Tarantula spider), this protein is Acanthoscurrin-2.